The primary structure comprises 865 residues: MKTAQIRQKFLDYFESKGHTIESSASLIPHNDKTLLFVNAGMVLFKDVFSGVEKRPYMRAVSVQRCVRAGGKHNDLENVGYTARHHTFFEMLGNFSFGDYFKREAIYYAWEFLTKELNLPKEKLWVSVFEEDDEAENIWINEIGFPKNRISRCGTKDNFWQMGDTGPCGPSSEIFYDYGEHIAGGPPGHADEDGDRYIEIWNLVFTQFDKQEDGHLKPLAVPCVDTGMGLERLAAVLQHKNNNYDTDGFQSLVKAIVNLTPKSNNIKNNNASVRVIADHIRSTAFMIVDGVNPSNEGRGYVLRRIIRRGIRHGHKMGIDKVFFYRLAPVLALEFKDAYPELKQALPKVEKVLKREEQRFSQTLDQGMRLLEDAITNLNGSEIDGKTVFKLYDTYGFPIDLTADIARERHLTIDMLGFEFEMTRQRDRARQAGDFKISKKNVDIIGVTEFLGYEQLENISSILALVKNSKLVEEIKAGEYGIVVLAQSSFYAESGGQVGDSGVLSNAKIEFKVDHTNKQKSGVFEHYGVLNKGVLKVGDTIQANVDKKSRKCIARNHSATHLLHAALRIVLGETVTQKGSLVDSEKLRFDFSHDEVITKSDINKIEGMINRKILGNTKVHTDIINIENAKKKDAIALFGEKYSDTVRVLTMGKDDFSVELCGGTHVKQLGDIGLFRITSESGVSAGVRRIEALTGYDAYQFDNQMQNSLSEISQMTKSNNAQVVEKVTQFIKQQKELEEQITIFQKQLTSNQGDDLIGQVQEVRNIKLLSTVVEGSSGKDLRNIADKLKDKLGSAVIVLAVVSNDKVSLVVGVTKDLTKRYQAVKILNYVAEQIGGKGGGRPDMAQGGGTQPEYLAKALASVKSLI.

Zn(2+) is bound by residues histidine 556, histidine 560, cysteine 660, and histidine 664.

Belongs to the class-II aminoacyl-tRNA synthetase family. Requires Zn(2+) as cofactor.

Its subcellular location is the cytoplasm. It carries out the reaction tRNA(Ala) + L-alanine + ATP = L-alanyl-tRNA(Ala) + AMP + diphosphate. Functionally, catalyzes the attachment of alanine to tRNA(Ala) in a two-step reaction: alanine is first activated by ATP to form Ala-AMP and then transferred to the acceptor end of tRNA(Ala). Also edits incorrectly charged Ser-tRNA(Ala) and Gly-tRNA(Ala) via its editing domain. This is Alanine--tRNA ligase from Ruthia magnifica subsp. Calyptogena magnifica.